A 224-amino-acid polypeptide reads, in one-letter code: Cytidylate kinase (224 aa).

ATP is bound at residue 11-19 (GPAAAGKST).

Belongs to the cytidylate kinase family. Type 1 subfamily.

The protein localises to the cytoplasm. The enzyme catalyses CMP + ATP = CDP + ADP. It carries out the reaction dCMP + ATP = dCDP + ADP. The sequence is that of Cytidylate kinase from Bacillus velezensis (strain DSM 23117 / BGSC 10A6 / LMG 26770 / FZB42) (Bacillus amyloliquefaciens subsp. plantarum).